The following is a 358-amino-acid chain: MPLVSLSFASSSSKAMALCSICPRIPLRFRPKPISPFLSKPQICLAYRVYSSLQSTTPSTRDELGTVSIGFLGMGIMGSPMAQNLIKAGCDVTVWNRTKSKCDPLVGLGAKYKSSPEEVTATCDLTFAMLADPESAIDVACGKNGAIFGISSGKGYVDVSTVDVASSILISKQIKDTGALFLEAPVSGSKKPAEDGQLIFLTAGDKPLYEKAAPFLDIMGKSKFYLGEVGNGAAMKLVVNMIMGSMMASFAEGILLSQKVGLDPNVLVEVVSQGAINAPMYSLKGPSMIKSVYPTAFPLKHQQKDMRLALGLAESVSQSTPIAAAANELYKVAKSYGLSDEDFSAVIEALKAAKSREA.

The N-terminal 44 residues, 1-44, are a transit peptide targeting the chloroplast; the sequence is MPLVSLSFASSSSKAMALCSICPRIPLRFRPKPISPFLSKPQIC. NADP(+) is bound by residues 70–84 and threonine 161; that span reads GFLG…MAQN. Lysine 236 is a catalytic residue. Residue lysine 304 coordinates NADP(+).

The protein belongs to the HIBADH-related family. NP60 subfamily.

It is found in the plastid. The protein resides in the chloroplast stroma. The catalysed reaction is glycolate + NADP(+) = glyoxylate + NADPH + H(+). It carries out the reaction 4-hydroxybutanoate + NADP(+) = succinate semialdehyde + NADPH + H(+). With respect to regulation, the ratio of NADPH/NADP(+) may regulate enzymatic activity. Its function is as follows. Catalyzes the NADPH-dependent reduction of glyoxylate to glycolate as well as succinic semialdehyde (SSA) to gamma-hydroxybutyrate in vitro. May function in redox homeostasis and play a role in oxidative stress tolerance by detoxifying glyoxylate and SSA generated in glycolate metabolism and GABA metabolism, respectively. The polypeptide is Glyoxylate/succinic semialdehyde reductase 2, chloroplastic (GLYR2) (Arabidopsis thaliana (Mouse-ear cress)).